Reading from the N-terminus, the 339-residue chain is Heat-inducible transcription repressor HrcA (339 aa).

Belongs to the HrcA family.

Functionally, negative regulator of class I heat shock genes (grpE-dnaK-dnaJ and groELS operons). Prevents heat-shock induction of these operons. In Thermotoga neapolitana (strain ATCC 49049 / DSM 4359 / NBRC 107923 / NS-E), this protein is Heat-inducible transcription repressor HrcA.